A 655-amino-acid chain; its full sequence is Polycyclic ketone monooxygenase (655 aa).

FAD-binding residues include glycine 89, aspartate 113, alanine 114, threonine 121, tryptophan 124, cysteine 132, aspartate 133, tyrosine 139, and valine 183. 5 residues coordinate NADPH: threonine 277, threonine 280, threonine 301, lysine 425, and valine 452. A disulfide bond links cysteine 424 and cysteine 596. FAD is bound by residues threonine 492 and asparagine 541. NADPH is bound at residue tyrosine 600.

The protein belongs to the FAD-binding monooxygenase family. FAD serves as cofactor.

In terms of biological role, polycyclic ketone monooxygenase (PockeMO) that displays excellent enantioselectivity, acts on various ketones, and is particularly active on polycyclic molecules. Breaks C-C bonds through the insertion of a single oxygen atom adjacent to a carbonyl moiety, yielding esters or lactones from ketones. PockeMO is able to convert linear ketones (including cyclohexane and to a lesser extend 4-octanone), cyclic ketones (including cyclohexanone and cyclooctanone), bicyclic ketones and polycyclic ketones (steroids). Performs oxidation of the keto functionalities at both the A and D rings of steroids. Particularly, oxidizes the A ring of stanolone or pregnenolone. Selectively oxidizes the D ring of androstenedione or androstadienedione, steroids with keto groups in both the A and D rings, to yield the pharmaceutically relevant testo(lo)lactone. This chain is Polycyclic ketone monooxygenase, found in Thermothelomyces thermophilus (strain ATCC 42464 / BCRC 31852 / DSM 1799) (Sporotrichum thermophile).